The chain runs to 1279 residues: MSGTKWTDEQRQAIFTKDCNLLVAAGAGAGKTAVLVQRIIEKILDKGEPIDIDKLLVVTFTNAAAAEMRERIGDAISKGLDEDPESKVLRKQLTLLNKSNIMTIHSFCLQVIKNNFHTMEIDPNFRICDETEGILMKQEAIDELFDELYEIENEDFINLVESYASRKDTRLQEVVLELHRFAKSAPFSYDWLLNMAEEFNVGEEFNFEETPWADMIMEDMKVLLHGFKNMLQQSIDVILNSEGIDYYYEPFKMDLSFINSLLEKSSFKEFRGEIIAYDFPKLPLKRNKDADKEAKERVKKLRDKVKKKIVELKNILDSYENEFIKKEFIFLYPSMKALSNLVILFDKKYEAKKRERDLIDFNDIEHLCLSILTDKNSEGHIIPSDIALDYRKKFAEVLIDEYQDSNLVQEVIMSMVSRVKGYWSFYNGQLMFNEEEINLEEPQICLDIPNRFMVGDVKQSIYRFRQAKPEIFLDKYNEYSEEEGTKNRKVKLFKNFRSRKEVINGVNYLFKQIMSKTIGELDYTEEEALKVGASYGEEVKGEPIELCLMDKKYEISEEVLKEYNVDEEEALDNIQLEGRLVAKKIQKLVGNNLEGGLKVFDKKLGEYRNLQYRDIVILMRATSNWAPIFVEELAKEGIPVFADTNSGYFDTAEIKTMISLLQIIDNPLQDIPLLSVLRSPIASFTDDELIDIRMVNKNITFYECMEIIYRLYKNEKLDSYYSFYIEDENKINKIIKDMNEKLKNKICSFIEKLKLWREKSIHIDIDEFIWFLYVETGYYGYAGALQAGEQRQANLRILFQRAKQYAKTSYKGLFNFINFINKLKFSSGDMGSAKILGENENVVRIMSIHKSKGLEFPVVILSGTGKNFNMTDLNKNILFHRDLGYGPDYVDTERRIAYPSLVKNIIKNKIRLETLSEEMRILYVALTRAREKLIITGLINNMDKTVEDWLNLSEDKNKVPEYAVMSGKTYLDWIGPALIKHKDAVSFREELKMTSELSNIVDDKSKWKIELWNKRELLKEKVEEDEVEISEKIKETLMNLEESNYKEEIYKRLSFKYKYDNASSIPTKLSVSDVKKQFILDEKENTEELFKKLELRKPMFMEEKKKISPSERGTIIHLFMQHLDLKKAENEEDIKEQINRLIEREFITYEQSKVINPYKILKFCRGELGKRILNSNNVNKEMPFSIEIPALEIYKELDKEIYKDEKLIIQGVIDCYFEEEDGLVLLDYKTDYVNDIEEIKNRYEIQIKYYEEALNRITGKNVKDKYLYLFSVDNYIKID.

A UvrD-like helicase ATP-binding domain is found at 4-499 (TKWTDEQRQA…VKLFKNFRSR (496 aa)). Residue 25–32 (AGAGAGKT) coordinates ATP. A UvrD-like helicase C-terminal domain is found at 526-853 (EEALKVGASY…RIMSIHKSKG (328 aa)).

Belongs to the helicase family. AddA subfamily. Heterodimer of AddA and AddB/RexB. It depends on Mg(2+) as a cofactor.

It catalyses the reaction Couples ATP hydrolysis with the unwinding of duplex DNA by translocating in the 3'-5' direction.. The catalysed reaction is ATP + H2O = ADP + phosphate + H(+). The heterodimer acts as both an ATP-dependent DNA helicase and an ATP-dependent, dual-direction single-stranded exonuclease. Recognizes the chi site generating a DNA molecule suitable for the initiation of homologous recombination. The AddA nuclease domain is required for chi fragment generation; this subunit has the helicase and 3' -&gt; 5' nuclease activities. The protein is ATP-dependent helicase/nuclease subunit A of Clostridium botulinum (strain Hall / ATCC 3502 / NCTC 13319 / Type A).